Here is a 130-residue protein sequence, read N- to C-terminus: Iron-sulfur cluster insertion protein ErpA (130 aa).

The iron-sulfur cluster site is built by Cys46, Cys116, and Cys118.

The protein belongs to the HesB/IscA family. Homodimer. Requires iron-sulfur cluster as cofactor.

In terms of biological role, required for insertion of 4Fe-4S clusters for at least IspG. This chain is Iron-sulfur cluster insertion protein ErpA, found in Legionella pneumophila (strain Lens).